The sequence spans 140 residues: Ribosome-binding factor A (140 aa).

A disordered region spans residues 121–140 (KAAEHGREDEELDDTEQDDK). Positions 129 to 140 (DEELDDTEQDDK) are enriched in acidic residues.

This sequence belongs to the RbfA family. Monomer. Binds 30S ribosomal subunits, but not 50S ribosomal subunits or 70S ribosomes.

It localises to the cytoplasm. In terms of biological role, one of several proteins that assist in the late maturation steps of the functional core of the 30S ribosomal subunit. Associates with free 30S ribosomal subunits (but not with 30S subunits that are part of 70S ribosomes or polysomes). Required for efficient processing of 16S rRNA. May interact with the 5'-terminal helix region of 16S rRNA. This Shewanella loihica (strain ATCC BAA-1088 / PV-4) protein is Ribosome-binding factor A.